Consider the following 163-residue polypeptide: Inorganic pyrophosphatase (163 aa).

Glu-8 contributes to the Mg(2+) binding site. The substrate site is built by Lys-16, Arg-30, and Tyr-42. Residues Asp-52, Asp-57, Asp-84, and Asp-89 each coordinate Mg(2+). The Proton acceptor role is filled by Asp-89. Tyr-126 contacts substrate.

The protein belongs to the PPase family. As to quaternary structure, homohexamer. It depends on Mg(2+) as a cofactor.

The protein resides in the cytoplasm. The catalysed reaction is diphosphate + H2O = 2 phosphate + H(+). Its function is as follows. Catalyzes the hydrolysis of inorganic pyrophosphate (PPi) forming two phosphate ions. The polypeptide is Inorganic pyrophosphatase (Streptomyces coelicolor (strain ATCC BAA-471 / A3(2) / M145)).